We begin with the raw amino-acid sequence, 250 residues long: Proteasome subunit alpha type-4-1 (250 aa).

The protein belongs to the peptidase T1A family. The 26S proteasome consists of a 20S proteasome core and two 19S regulatory subunits. The 20S proteasome core is composed of 28 subunits that are arranged in four stacked rings, resulting in a barrel-shaped structure. The two end rings are each formed by seven alpha subunits, and the two central rings are each formed by seven beta subunits. The catalytic chamber with the active sites is on the inside of the barrel.

The protein resides in the cytoplasm. It is found in the nucleus. The proteasome is a multicatalytic proteinase complex which is characterized by its ability to cleave peptides with Arg, Phe, Tyr, Leu, and Glu adjacent to the leaving group at neutral or slightly basic pH. The proteasome has an ATP-dependent proteolytic activity. This is Proteasome subunit alpha type-4-1 from Oryza sativa subsp. indica (Rice).